Here is a 356-residue protein sequence, read N- to C-terminus: Heparan sulfate 2-O-sulfotransferase 1 (356 aa).

At 1–11 the chain is on the cytoplasmic side; sequence MGLLRIMMPPK. Residues 12-28 traverse the membrane as a helical; Signal-anchor for type II membrane protein segment; it reads LQLLAVVAFAVAMLFLE. Residues 24–51 are a coiled coil; sequence MLFLENQIQKLEESRAKLERAIARHEVR. The Lumenal portion of the chain corresponds to 29–356; sequence NQIQKLEESR…FYEKIYPKSN (328 aa). Residues Lys-83, Thr-84, Ala-85, Ser-86, Thr-87, and Ser-88 each coordinate adenosine 3',5'-bisphosphate. 2 N-linked (GlcNAc...) asparagine glycosylation sites follow: Asn-108 and Asn-127. Active-site residues include His-140 and His-142. Adenosine 3',5'-bisphosphate is bound by residues Arg-164 and Ser-172. 2 disulfide bridges follow: Cys-201-Cys-209 and Cys-222-Cys-228. Adenosine 3',5'-bisphosphate is bound by residues Tyr-279, Ser-285, Thr-290, and Lys-293.

The protein belongs to the sulfotransferase 3 family. In terms of assembly, homotrimer. Interacts with the C5-epimerase GLCE. N-glycosylated.

The protein localises to the golgi apparatus membrane. In terms of biological role, catalyzes the transfer of a sulfo group from 3'-phospho-5'-adenylyl sulfate (PAPS) to the 2-OH position of iduronic acid (IdoA) or glucuronic acid (GlcA) within the heparan sulfate (HS) chain and participates in HS biosynthesis. Required for metanephric development of kidney formation, suggesting that 2-O-sulfation within HS is essential for signaling between ureteric bud and metanephric mesenchyme. In Cricetulus griseus (Chinese hamster), this protein is Heparan sulfate 2-O-sulfotransferase 1.